The primary structure comprises 346 residues: GTPase Obg (346 aa).

Residues 1–159 (MQFVDEANIR…RNLGLELSVL (159 aa)) form the Obg domain. The disordered stretch occupies residues 127–149 (NVHFKSSTNRTPRQCTPGEPGDE). The segment covering 130 to 140 (FKSSTNRTPRQ) has biased composition (polar residues). The OBG-type G domain maps to 160–333 (ADVGLLGMPN…LVKEVAYGLE (174 aa)). GTP is bound by residues 166 to 173 (GMPNAGKS), 191 to 195 (FTTLY), 213 to 216 (DIPG), 283 to 286 (NKTD), and 314 to 316 (SAV). Residues serine 173 and threonine 193 each contribute to the Mg(2+) site.

The protein belongs to the TRAFAC class OBG-HflX-like GTPase superfamily. OBG GTPase family. Monomer. Mg(2+) serves as cofactor.

It is found in the cytoplasm. Its function is as follows. An essential GTPase which binds GTP, GDP and possibly (p)ppGpp with moderate affinity, with high nucleotide exchange rates and a fairly low GTP hydrolysis rate. Plays a role in control of the cell cycle, stress response, ribosome biogenesis and in those bacteria that undergo differentiation, in morphogenesis control. This Hydrogenovibrio crunogenus (strain DSM 25203 / XCL-2) (Thiomicrospira crunogena) protein is GTPase Obg.